The chain runs to 497 residues: Cobyric acid synthase (497 aa).

Residues 250-445 form the GATase cobBQ-type domain; that stretch reads EVTIAVIRLP…LHGIFNNGPW (196 aa). Cys-331 (nucleophile) is an active-site residue. The active site involves His-437.

Belongs to the CobB/CobQ family. CobQ subfamily.

It functions in the pathway cofactor biosynthesis; adenosylcobalamin biosynthesis. Its function is as follows. Catalyzes amidations at positions B, D, E, and G on adenosylcobyrinic A,C-diamide. NH(2) groups are provided by glutamine, and one molecule of ATP is hydrogenolyzed for each amidation. The chain is Cobyric acid synthase from Acaryochloris marina (strain MBIC 11017).